We begin with the raw amino-acid sequence, 134 residues long: uncharacterized protein (134 aa).

A run of 3 helical transmembrane segments spans residues 8–28 (FTSL…TVMY), 54–74 (GFQA…TFLL), and 113–133 (LACF…RLVD).

The protein belongs to the cornichon family.

The protein localises to the endoplasmic reticulum membrane. This is an uncharacterized protein from Schizosaccharomyces pombe (strain 972 / ATCC 24843) (Fission yeast).